A 965-amino-acid chain; its full sequence is MKPKNNKDKKSKFSYKETLNLLKTDFSMRANSVSREPQIQEFWLKNKIDLELGSSNLGEKFTLHDGPPYANGSLHMGHALNKVLKDIINKYKTLKGFKVHFVPGWDCHGLPIELKVLQSLKSHERKDLDSLGLRKKATDYAKIQIKNQLEGFKRWGIWGDWDNPYLTLKNNYESAQIGVFGKMFLNGYIYRGLKPVHWSPSSRTALAEAELEYPEEHYSSSVYVSLNISNLSDEILLKLEEKDLKNKLLSNLNKLFIAIWTTTPWTIPGNEAVAINPRINYVFAEDQNGDIFLFAKDLISEISEKLEREFNTLIDVKGSMLTGIEYKHPTKNKFCNIVIGGDYITTESGTGIVHTAPGHGMDDFNVGKKYHLPITCIVDEKGNLNNHAEKFCGLNVLKDANDLIIEDLKKNNLLLLKEKYKHRYPYDWRTKKPTIFRATEQWFASVEGFRSSALKAIEDVEWMPKTGKKRIYSMVVGRGDWCISRQRSWGVPIPVFYEKKGKEILLNSETINHIQKLFNEHGADIWWDWDEKDLLPKQYKEESDRWIKGLDTMDVWFDSGSSWAAVCEQREELAYPADLYLEGSDQHRGWFQSSLLTSVAVNNKPPYKKVLTHGFALDENGRKMSKSLGNVVDPNIIINGGSNQKIQPAYGADVLRLWVSSVDYSVDVPIGSNILKQLSDVYRKVRNTARYLLGNIHDYDPIDEEIDIDQLPILDQWMLNRLVDVSDQITIAYENYEFSKFFQILQSFCVVDLSNFYLDIAKDRLYVSAKSSIRRRTCQFVMSKIVENLAVLISPVLCHMAEDIWQNIPYSTNEKSVFERGWPNLPKSWINPELNERISNLRKLRVEINKAIEGCRTQQIIGAALETEVNYLPENEIIKNSLSWLEKFGNKEVDLYSDWLIVSKFNVVNNLFEDYLIIDDNELGKIQILKAKGQKCDRCWHYQSNTVMGIEDTKLCKRCANIITS.

Positions 68–78 (PYANGSLHMGH) match the 'HIGH' region motif. E582 provides a ligand contact to L-isoleucyl-5'-AMP. The short motif at 623-627 (KMSKS) is the 'KMSKS' region element. K626 lines the ATP pocket. Positions 936, 939, 956, and 959 each coordinate Zn(2+).

The protein belongs to the class-I aminoacyl-tRNA synthetase family. IleS type 1 subfamily. Monomer. Requires Zn(2+) as cofactor.

It is found in the cytoplasm. It carries out the reaction tRNA(Ile) + L-isoleucine + ATP = L-isoleucyl-tRNA(Ile) + AMP + diphosphate. In terms of biological role, catalyzes the attachment of isoleucine to tRNA(Ile). As IleRS can inadvertently accommodate and process structurally similar amino acids such as valine, to avoid such errors it has two additional distinct tRNA(Ile)-dependent editing activities. One activity is designated as 'pretransfer' editing and involves the hydrolysis of activated Val-AMP. The other activity is designated 'posttransfer' editing and involves deacylation of mischarged Val-tRNA(Ile). The polypeptide is Isoleucine--tRNA ligase (Prochlorococcus marinus (strain MIT 9515)).